A 638-amino-acid polypeptide reads, in one-letter code: Growth hormone receptor (638 aa).

A signal peptide spans 1-18; that stretch reads MDLWQLLLTLAVAGSGNA. At 19 to 264 the chain is on the extracellular side; the sequence is VSGSEATPAI…SPFACEEDFQ (246 aa). 2 disulfide bridges follow: cysteine 56–cysteine 66 and cysteine 101–cysteine 112. N-linked (GlcNAc...) asparagine glycosylation is present at asparagine 115. Cysteine 126 and cysteine 140 are disulfide-bonded. The region spanning 151-254 is the Fibronectin type-III domain; it reads PPIGLNWTLL…EVLYVALPQM (104 aa). N-linked (GlcNAc...) asparagine glycosylation is found at asparagine 156, asparagine 161, and asparagine 200. The short motif at 240–244 is the WSXWS motif element; it reads YGEFS. The helical transmembrane segment at 265–288 threads the bilayer; sequence FPWFLIIIFGIFGLTMILFLFIFS. At 289 to 638 the chain is on the cytoplasmic side; sequence KQQRIKMLIL…STDQLNKIMP (350 aa). Residues 294 to 379 are required for JAK2 binding; sequence KMLILPPVPV…HEKSLNILGA (86 aa). The Box 1 motif motif lies at 297 to 305; the sequence is ILPPVPVPK. Residues 340 to 349 carry the UbE motif motif; the sequence is DSWVEFIELD. A Phosphoserine modification is found at serine 341. Polar residues predominate over residues 429–446; that stretch reads KNQSNSPSTDTAPNTQQP. A disordered region spans residues 429-448; sequence KNQSNSPSTDTAPNTQQPGV. Tyrosine 487 and tyrosine 595 each carry phosphotyrosine.

It belongs to the type I cytokine receptor family. Type 1 subfamily. As to quaternary structure, on growth hormone (GH) binding, forms homodimers and binds JAK2 via a box 1-containing domain. Post-translationally, the soluble form (GHBP) is produced by phorbol ester-promoted proteolytic cleavage at the cell surface (shedding) by ADAM17/TACE. Shedding is inhibited by growth hormone (GH) binding to the receptor probably due to a conformational change in GHR rendering the receptor inaccessible to ADAM17. On GH binding, phosphorylated on tyrosine residues in the cytoplasmic domain by JAK2. In terms of processing, ubiquitinated by the ECS(SOCS2) complex following ligand-binding and phosphorylation by JAK2, leading to its degradation by the proteasome. Regulation by the ECS(SOCS2) complex acts as a negative feedback loop of growth hormone receptor signaling. Ubiquitination is not sufficient for GHR internalization.

It is found in the cell membrane. Its subcellular location is the secreted. In terms of biological role, receptor for pituitary gland growth hormone (GH1) involved in regulating postnatal body growth. On ligand binding, couples to the JAK2/STAT5 pathway. Functionally, the soluble form (GHBP) acts as a reservoir of growth hormone in plasma and may be a modulator/inhibitor of GH signaling. This chain is Growth hormone receptor (GHR), found in Ailuropoda melanoleuca (Giant panda).